The chain runs to 705 residues: Dolichyl-diphosphooligosaccharide--protein glycosyltransferase subunit STT3A (705 aa).

Residues 1-17 (MTKLGFLRLSYEKQDTL) lie on the Cytoplasmic side of the membrane. Residues 18–38 (LKLLILSMAAVLSFSTRLFAV) form a helical membrane-spanning segment. At 39 to 119 (LRFESVIHEF…IDIRNVCVFL (81 aa)) the chain is on the lumenal side. The DXD motif 1 motif lies at 47–49 (EFD). Position 49 (Asp-49) interacts with Mn(2+). The helical transmembrane segment at 120–138 (APLFSSFTTIVTYHLTKEL) threads the bilayer. Residues 139-140 (KD) are Cytoplasmic-facing. A helical transmembrane segment spans residues 141–158 (AGAGLLAAAMIAVVPGYI). Residues 159–169 (SRSVAGSYDNE) lie on the Lumenal side of the membrane. Mn(2+)-binding residues include Asp-167 and Glu-169. Residues 167–169 (DNE) carry the DXD motif 2 motif. Residues 170–189 (GIAIFCMLLTYYMWIKAVKT) form a helical membrane-spanning segment. The Cytoplasmic segment spans residues 190–191 (GS). Residues 192–206 (IYWAAKCALAYFYMV) form a helical membrane-spanning segment. The Lumenal segment spans residues 207 to 211 (SSWGG). A helical membrane pass occupies residues 212–228 (YVFLINLIPLHVLVLML). Residues 229 to 233 (TGRFS) lie on the Cytoplasmic side of the membrane. Residues 234-259 (HRIYVAYCTVYCLGTILSMQISFVGF) traverse the membrane as a helical segment. The Lumenal segment spans residues 260-267 (QPVLSSEH). The chain crosses the membrane as a helical span at residues 268–287 (MAAFGVFGLCQIHAFVDYLR). At 288–300 (SKLNPQQFEVLFR) the chain is on the cytoplasmic side. A helical transmembrane segment spans residues 301 to 321 (SVISLVGFVLLTVGALLMLTG). Residues 322–356 (KISPWTGRFYSLLDPSYAKNNIPIIASVSEHQPTT) are Lumenal-facing. Residues 348–351 (SVSE) carry the SVSE motif motif. A helical transmembrane segment spans residues 357–379 (WSSYYFDLQLLVFMFPVGLYYCF). Residues 380–385 (SNLSDA) are Cytoplasmic-facing. Residues 386–402 (RIFIIMYGVTSMYFSAV) form a helical membrane-spanning segment. The Lumenal segment spans residues 403 to 406 (MVRL). A dolichyl diphosphooligosaccharide-binding site is contributed by Arg-405. Residues 407–428 (MLVLAPVMCILSGIGVSQVLST) form a helical membrane-spanning segment. At 429–453 (YMKNLDISRPDKKSKKQQDSTYPIK) the chain is on the cytoplasmic side. Residues 454 to 473 (NEVASGMILVMAFFLITYTF) form a helical membrane-spanning segment. At 474-705 (HSTWVTSEAY…DLDNRGLSRT (232 aa)) the chain is on the lumenal side. Residues 525 to 527 (WWD) are interacts with target acceptor peptide in protein substrate. Positions 525–529 (WWDYG) match the WWDYG motif motif. Dolichyl diphosphooligosaccharide is bound at residue Tyr-530. N-linked (GlcNAc...) asparagine glycans are attached at residues Asn-537 and Asn-544. N-linked (GlcNAc...) (high mannose) asparagine glycosylation is present at Asn-548. Positions 592–599 (DINKFLWM) match the DK motif motif.

It belongs to the STT3 family. As to quaternary structure, component of the oligosaccharyltransferase (OST) complex. There are 2 OST complexes, OST-A and OST-B, which contain STT3A or STT3B as catalytic subunit, respectively. OST-A and OST-B contain common core subunits RPN1, RPN2, OST48, OST4, DAD1 and TMEM258, and OST-A contains DC2/OSTC and KRTCAP2/KCP2 specific accessory subunits. OST-A complex assembly occurs through the formation of 3 subcomplexes. Subcomplex 1 contains RPN1 and TMEM258, subcomplex 2 contains the OST-A-specific subunits STT3A, DC2/OSTC, and KCP2 as well as the core subunit OST4, and subcomplex 3 contains RPN2, DAD1, and OST48. The OST-A complex can form stable complexes with the Sec61 complex or with both the Sec61 and TRAP complexes. Mg(2+) serves as cofactor. It depends on Mn(2+) as a cofactor.

It is found in the endoplasmic reticulum. The protein resides in the endoplasmic reticulum membrane. It catalyses the reaction a di-trans,poly-cis-dolichyl diphosphooligosaccharide + L-asparaginyl-[protein] = N(4)-(oligosaccharide-(1-&gt;4)-N-acetyl-beta-D-glucosaminyl-(1-&gt;4)-N-acetyl-beta-D-glucosaminyl)-L-asparaginyl-[protein] + a di-trans,poly-cis-dolichyl diphosphate + H(+). It functions in the pathway protein modification; protein glycosylation. Functionally, catalytic subunit of the oligosaccharyl transferase (OST) complex that catalyzes the initial transfer of a defined glycan (Glc(3)Man(9)GlcNAc(2) in eukaryotes) from the lipid carrier dolichol-pyrophosphate to an asparagine residue within an Asn-X-Ser/Thr consensus motif in nascent polypeptide chains, the first step in protein N-glycosylation. N-glycosylation occurs cotranslationally and the complex associates with the Sec61 complex at the channel-forming translocon complex that mediates protein translocation across the endoplasmic reticulum (ER). All subunits are required for a maximal enzyme activity. This subunit contains the active site and the acceptor peptide and donor lipid-linked oligosaccharide (LLO) binding pockets. STT3A is present in the majority of OST complexes and mediates cotranslational N-glycosylation of most sites on target proteins, while STT3B-containing complexes are required for efficient post-translational glycosylation and mediate glycosylation of sites that have been skipped by STT3A. STT3A-containing OST-A complex is also required to prevent hyperglycosylation of some target proteins by preventing glycosylation of facultative sites before folding of target proteins is completed. In Mus musculus (Mouse), this protein is Dolichyl-diphosphooligosaccharide--protein glycosyltransferase subunit STT3A.